The chain runs to 198 residues: MAMDDYDDDMSSVGVTTARIENQHQQHPHQQGQHGHHQQGQGQSQYSAGAVKVGGWRYEDASRYIGEWNQRGQKHGIGHLQFADGTRYDGQFQEGLSQGVGCLWFADGAKYEGEFHQGWFHGNGIFWRADGMKYEGEFRGGKIWGLGLLTFQDFTHGFPRNEGFFQDCRFMRRRRCPEVVQRAQKCALMARSQCEHPY.

At alanine 2 the chain carries N-acetylalanine. A compositionally biased stretch (low complexity) spans 23–45 (QHQQHPHQQGQHGHHQQGQGQSQ). The interval 23-46 (QHQQHPHQQGQHGHHQQGQGQSQY) is disordered. 4 MORN repeats span residues 64–87 (YIGEWNQRGQKHGIGHLQFADGTR), 88–109 (YDGQFQEGLSQGVGCLWFADGA), 111–132 (YEGEFHQGWFHGNGIFWRADGM), and 134–153 (YEGEFRGGKIWGLGLLTFQD).

As to quaternary structure, interacts with ninaC. Post-translationally, phosphorylated under dark conditions and is dephosphorylated by light exposure. As to expression, retina. Expressed primarily in the phototransducing compartment of photoreceptor cells, the rhabdomeres and its expression is dependent on ninaC protein (at protein level).

The protein localises to the membrane. The protein resides in the cell projection. It localises to the rhabdomere membrane. Plays a role in promoting axonal degeneration following neuronal injury by toxic insult or trauma. Organizes rhabdomeric components to suppress random activation of the phototransduction cascade and thus increases the signaling fidelity of dark-adapted photoreceptors. The rtp/ninaC complex is required for stability of inad and inac and the normal termination of phototransduction in the retina. The polypeptide is MORN repeat-containing protein 4 homolog (Drosophila melanogaster (Fruit fly)).